Consider the following 411-residue polypeptide: Multifunctional CCA protein (411 aa).

ATP-binding residues include glycine 8 and arginine 11. Residues glycine 8 and arginine 11 each contribute to the CTP site. Mg(2+) contacts are provided by glutamate 21 and aspartate 23. ATP contacts are provided by arginine 91, arginine 137, and arginine 140. Arginine 91, arginine 137, and arginine 140 together coordinate CTP. One can recognise an HD domain in the interval 228–329 (TGVHALLALE…LKTLLALDGL (102 aa)).

Belongs to the tRNA nucleotidyltransferase/poly(A) polymerase family. Bacterial CCA-adding enzyme type 1 subfamily. Monomer. Can also form homodimers and oligomers. Mg(2+) is required as a cofactor. Requires Ni(2+) as cofactor.

It catalyses the reaction a tRNA precursor + 2 CTP + ATP = a tRNA with a 3' CCA end + 3 diphosphate. It carries out the reaction a tRNA with a 3' CCA end + 2 CTP + ATP = a tRNA with a 3' CCACCA end + 3 diphosphate. In terms of biological role, catalyzes the addition and repair of the essential 3'-terminal CCA sequence in tRNAs without using a nucleic acid template. Adds these three nucleotides in the order of C, C, and A to the tRNA nucleotide-73, using CTP and ATP as substrates and producing inorganic pyrophosphate. tRNA 3'-terminal CCA addition is required both for tRNA processing and repair. Also involved in tRNA surveillance by mediating tandem CCA addition to generate a CCACCA at the 3' terminus of unstable tRNAs. While stable tRNAs receive only 3'-terminal CCA, unstable tRNAs are marked with CCACCA and rapidly degraded. The sequence is that of Multifunctional CCA protein from Teredinibacter turnerae (strain ATCC 39867 / T7901).